The primary structure comprises 337 residues: Glyceraldehyde-3-phosphate dehydrogenase (337 aa).

Residues 12-13 (RI), D36, R80, and S122 contribute to the NAD(+) site. D-glyceraldehyde 3-phosphate is bound by residues 153 to 155 (SCT) and T184. C154 serves as the catalytic Nucleophile. Residue N185 coordinates NAD(+). Residues R199, 212–213 (TG), and R235 each bind D-glyceraldehyde 3-phosphate. NAD(+) is bound at residue N318.

Belongs to the glyceraldehyde-3-phosphate dehydrogenase family. Homotetramer.

It is found in the cytoplasm. It catalyses the reaction D-glyceraldehyde 3-phosphate + phosphate + NAD(+) = (2R)-3-phospho-glyceroyl phosphate + NADH + H(+). Its pathway is carbohydrate degradation; glycolysis; pyruvate from D-glyceraldehyde 3-phosphate: step 1/5. Its function is as follows. Catalyzes the oxidative phosphorylation of glyceraldehyde 3-phosphate (G3P) to 1,3-bisphosphoglycerate (BPG) using the cofactor NAD. The first reaction step involves the formation of a hemiacetal intermediate between G3P and a cysteine residue, and this hemiacetal intermediate is then oxidized to a thioester, with concomitant reduction of NAD to NADH. The reduced NADH is then exchanged with the second NAD, and the thioester is attacked by a nucleophilic inorganic phosphate to produce BPG. The sequence is that of Glyceraldehyde-3-phosphate dehydrogenase (gap) from Zymomonas mobilis subsp. mobilis (strain ATCC 31821 / ZM4 / CP4).